We begin with the raw amino-acid sequence, 692 residues long: Elongation factor G (692 aa).

The tr-type G domain maps to 8-283 (QDLRNIGIVA…AVVDYLPSPL (276 aa)). GTP is bound by residues 17–24 (AHIDAGKT), 81–85 (DTPGH), and 135–138 (NKLD).

Belongs to the TRAFAC class translation factor GTPase superfamily. Classic translation factor GTPase family. EF-G/EF-2 subfamily.

It is found in the cytoplasm. Its function is as follows. Catalyzes the GTP-dependent ribosomal translocation step during translation elongation. During this step, the ribosome changes from the pre-translocational (PRE) to the post-translocational (POST) state as the newly formed A-site-bound peptidyl-tRNA and P-site-bound deacylated tRNA move to the P and E sites, respectively. Catalyzes the coordinated movement of the two tRNA molecules, the mRNA and conformational changes in the ribosome. The protein is Elongation factor G of Hydrogenobaculum sp. (strain Y04AAS1).